We begin with the raw amino-acid sequence, 752 residues long: MPPNTPDASDARPPQADTETHSHSESENPVIESPKPKAHAPLTNQDWWPDQVDVSRLHKQPIEGNPLGAGFNYAEEFQKLDVEALRADMLELMTSSQDWWPRDYGTYAGLFIRMSWHAAGTYRIFDGRGGAGQGAQRFAPINSWPDNVSLDKARRLLWPIKQKYGNKISWADLIIFAGNVALESAGFKTFGFAFGRQDIWEPEEILWGQEDTWLGTDKRYGGTNDSTNRELANPYGATTMGLIYVNPEGPEGKPDPLAAAHDIRETFGRMAMNDEETAALIVGGHTLGKTHGPGPGDLVGPEPEAAPIEQQGLGWKCAFGSGKGSDTITSGLEVVWTTTPTKWSNSYLEILYGYEWELTKSPGDAWQFEAKDAEAIIPDPFGGPPRKPTMLVTDISMRVDPIYGPITRRWLEHPEELNEAFAKAWYKLLHRDMGPISRYLGPWIPEPQLWQDPVPDVDHPLVDEQDIAALKEKLLDSGLSVQQLVKTAWSAAASFRGTDKRGGANGGRLRLQPQRNWEVNEPSELDKALPVLERIAQDFNASASDGKKISLADLIVLGGSAAIEKAARDGGYEVKVHFVAGRTDASQENTDVDSFAVLEPRADGFRNFVRPGDKAPLEQLLVDKAYFLNLTAPEMTVLVGGLRALNTNHGGSKHGVFTANPGALSNDFFVNLLDMSTEWKPSETAENVYEGRDRRTGQTRWTATANDLVFGSNSVLRAVAEVYAQEDNKAKMIEDFVAAWVKVMNNDRFDLD.

Residues 1–45 (MPPNTPDASDARPPQADTETHSHSESENPVIESPKPKAHAPLTNQ) form a disordered region. The tryptophyl-tyrosyl-methioninium (Trp-Tyr) (with M-270) cross-link spans 116–244 (WHAAGTYRIF…YGATTMGLIY (129 aa)). The active-site Proton acceptor is the histidine 117. Residues 244 to 270 (YVNPEGPEGKPDPLAAAHDIRETFGRM) constitute a cross-link (tryptophyl-tyrosyl-methioninium (Tyr-Met) (with W-116)). Residue histidine 285 participates in heme b binding.

Belongs to the peroxidase family. Peroxidase/catalase subfamily. In terms of assembly, homodimer or homotetramer. Requires heme b as cofactor. Formation of the three residue Trp-Tyr-Met cross-link is important for the catalase, but not the peroxidase activity of the enzyme.

The enzyme catalyses H2O2 + AH2 = A + 2 H2O. It carries out the reaction 2 H2O2 = O2 + 2 H2O. Its function is as follows. Bifunctional enzyme with both catalase and broad-spectrum peroxidase activity. May play a role in the intracellular survival of mycobacteria. In Mycolicibacterium fortuitum (Mycobacterium fortuitum), this protein is Catalase-peroxidase 1.